Consider the following 567-residue polypeptide: MEGVRVPIACALILLAISSITSASIVEHTFNVQNLTVSRLCKRQVITVVNGSLPGPTIRVKEGDSLVIHVLNHSPHNITIHWHGIFHKLTVWADGPSMITQCPIQPGQRYAYRFNITGQEGTLWWHAHASFLRATVYGALVIRPKSGHSYPFPKPHKEVPILFGEWWNTDVVALEEAAIATGVPPNNSDAYTINGRPGNLYPCSKDRMFSLNVVKGKRYLLRIINAAMNIQLFFKIANHRLTVVAADAVYTAPYVTDVIVIAPGQTIDALLFADQSVDTSYYMAAHPYASAPAVPFPNTTTRGVIHYGGASKTGRSKPVLMPKLPSFFDTLTAYRFYSNLTALVNGPHWVPVPRYVDEEMLVTIGLGLEACADNTTCPKFSASMSNHSFVLPKKLSILEAVFHDVKGIFTADFPDQPPVKFDYTNPNVTQTNPGLLFTQKSTSAKILKFNTTVEVVLQNHALIAAESHPMHLHGFNFHVLAQGFGNYDPSRDRSKLNLVDPQSRNTLAVPVGGWAVIRFTANNPGAWIFHCHIDVHLPFGLGMIFVVKNGPTKSTTLPPPPPDLPKC.

The first 23 residues, 1–23 (MEGVRVPIACALILLAISSITSA), serve as a signal peptide directing secretion. Plastocyanin-like domains lie at 31 to 147 (NVQN…PKSG) and 157 to 310 (KEVP…YGGA). N-linked (GlcNAc...) asparagine glycosylation is found at Asn34, Asn50, and Asn77. His81 and His83 together coordinate Cu cation. The N-linked (GlcNAc...) asparagine glycan is linked to Asn115. The Cu cation site is built by His126 and His128. Asn186, Asn298, Asn339, Asn374, Asn386, Asn427, and Asn450 each carry an N-linked (GlcNAc...) asparagine glycan. One can recognise a Plastocyanin-like 3 domain in the interval 412 to 551 (DFPDQPPVKF…GMIFVVKNGP (140 aa)). Cu cation is bound by residues His468, His471, His473, His530, Cys531, His532, and His536.

Belongs to the multicopper oxidase family. Cu cation serves as cofactor. Predominantly expressed in tissues other than the inflorescence stem.

Its subcellular location is the secreted. It is found in the extracellular space. The protein resides in the apoplast. The enzyme catalyses 4 hydroquinone + O2 = 4 benzosemiquinone + 2 H2O. In terms of biological role, lignin degradation and detoxification of lignin-derived products. The protein is Laccase-7 (LAC7) of Arabidopsis thaliana (Mouse-ear cress).